A 206-amino-acid polypeptide reads, in one-letter code: Superoxide dismutase [Mn] (206 aa).

His-27, His-82, Asp-168, and His-172 together coordinate Mn(2+).

Belongs to the iron/manganese superoxide dismutase family. Homodimer. It depends on Mn(2+) as a cofactor.

The catalysed reaction is 2 superoxide + 2 H(+) = H2O2 + O2. Its function is as follows. Destroys superoxide anion radicals which are normally produced within the cells and which are toxic to biological systems. The sequence is that of Superoxide dismutase [Mn] (sodA) from Salmonella typhimurium (strain LT2 / SGSC1412 / ATCC 700720).